The chain runs to 113 residues: Colicin-E1 immunity protein (113 aa).

This protein is able to protect a cell, which harbors the plasmid ColE1 encoding colicin E1, against colicin E1. This Escherichia coli protein is Colicin-E1 immunity protein (imm).